The following is a 61-amino-acid chain: Opistoporin-4 (61 aa).

Residues 45-61 (EAGQMPFDEFMDILHYY) constitute a propeptide that is removed on maturation.

Belongs to the non-disulfide-bridged peptide (NDBP) superfamily. Long chain multifunctional peptide (group 2) family. Expressed by the venom gland.

The protein localises to the secreted. Its subcellular location is the target cell membrane. Functionally, at high concentrations, acts as a pore former in cellular membranes and causes the leakage of the cells. At submicromolar concentrations, degranulates granulocytes and has a weak hemolytic activity against human erythrocytes. Also strongly inhibits the production of superoxide anions. Has a strong antibacterial activity against Gram-negative bacteria but is less active against Gram-positive bacteria. Also has antifungal activity. The protein is Opistoporin-4 of Opistophthalmus carinatus (African yellow leg scorpion).